Here is a 402-residue protein sequence, read N- to C-terminus: Plasminogen activator inhibitor 1 (402 aa).

The first 23 residues, 1–23 (MQMSPALTCLVLGLALVFGEGSA), serve as a signal peptide directing secretion. Asparagine 232, asparagine 288, and asparagine 352 each carry an N-linked (GlcNAc...) asparagine glycan.

The protein belongs to the serpin family. Forms a heterodimer with TMPRSS7. Interacts with VTN. Binds LRP1B; binding is followed by internalization and degradation. Interacts with PPP1CB. In complex with PLAU/uPA, interacts with PLAUR/uPAR. Interacts with SORL1 and LRP1, either alone or in complex with PLAU; these interactions are abolished in the presence of LRPAP1/RAP. The ternary complex composed of PLAUR-PLAU-PAI1 also interacts with SORL1. Interacts with PLAT/tPA. Also interacts with SORL1, when complexed to PLAT/tPA. Inactivated by proteolytic attack of the urokinase-type (u-PA) and the tissue-type (TPA), cleaving the 369-Arg-|-Met-370 bond. In terms of tissue distribution, expressed in endothelial cells. Found in plasma, platelets, and hepatoma and fibrosarcoma cells.

The protein localises to the secreted. Functionally, serine protease inhibitor. Inhibits TMPRSS7. Is a primary inhibitor of tissue-type plasminogen activator (PLAT) and urokinase-type plasminogen activator (PLAU). As PLAT inhibitor, it is required for fibrinolysis down-regulation and is responsible for the controlled degradation of blood clots. As PLAU inhibitor, it is involved in the regulation of cell adhesion and spreading. Acts as a regulator of cell migration, independently of its role as protease inhibitor. It is required for stimulation of keratinocyte migration during cutaneous injury repair. It is involved in cellular and replicative senescence. Plays a role in alveolar type 2 cells senescence in the lung. Is involved in the regulation of cementogenic differentiation of periodontal ligament stem cells, and regulates odontoblast differentiation and dentin formation during odontogenesis. The sequence is that of Plasminogen activator inhibitor 1 (SERPINE1) from Homo sapiens (Human).